The sequence spans 43 residues: Mu-conotoxin-like CalTx 12.2.1E (43 aa).

A propeptide is located at residue Arg1. 4 disulfides stabilise this stretch: Cys4-Cys16, Cys11-Cys24, Cys18-Cys29, and Cys23-Cys35. 6'-bromotryptophan is present on Trp31. A 4-hydroxyproline modification is found at Pro36. Trp40 is subject to 6'-bromotryptophan.

Expressed by the venom duct.

The protein resides in the secreted. In terms of biological role, mu-conotoxins block voltage-gated sodium channels. This toxin reversibly blocks voltage-gated sodium channel in cephalopods, with no alteration in the voltage dependence of sodium conductance or on the kinetics of inactivation. This Californiconus californicus (California cone) protein is Mu-conotoxin-like CalTx 12.2.1E.